The chain runs to 314 residues: tRNA-cytidine(32) 2-sulfurtransferase (314 aa).

The PP-loop motif motif lies at Ser53 to Ser58. [4Fe-4S] cluster contacts are provided by Cys128, Cys131, and Cys219.

This sequence belongs to the TtcA family. Homodimer. Requires Mg(2+) as cofactor. [4Fe-4S] cluster is required as a cofactor.

Its subcellular location is the cytoplasm. It catalyses the reaction cytidine(32) in tRNA + S-sulfanyl-L-cysteinyl-[cysteine desulfurase] + AH2 + ATP = 2-thiocytidine(32) in tRNA + L-cysteinyl-[cysteine desulfurase] + A + AMP + diphosphate + H(+). The protein operates within tRNA modification. Its function is as follows. Catalyzes the ATP-dependent 2-thiolation of cytidine in position 32 of tRNA, to form 2-thiocytidine (s(2)C32). The sulfur atoms are provided by the cysteine/cysteine desulfurase (IscS) system. The chain is tRNA-cytidine(32) 2-sulfurtransferase from Colwellia psychrerythraea (strain 34H / ATCC BAA-681) (Vibrio psychroerythus).